The following is a 280-amino-acid chain: Shikimate kinase (280 aa).

Residue 86-96 coordinates ATP; sequence PPGVGLKGSAA.

The protein belongs to the GHMP kinase family. Archaeal shikimate kinase subfamily.

The protein localises to the cytoplasm. The enzyme catalyses shikimate + ATP = 3-phosphoshikimate + ADP + H(+). The protein operates within metabolic intermediate biosynthesis; chorismate biosynthesis; chorismate from D-erythrose 4-phosphate and phosphoenolpyruvate: step 5/7. The polypeptide is Shikimate kinase (aroK) (Aeropyrum pernix (strain ATCC 700893 / DSM 11879 / JCM 9820 / NBRC 100138 / K1)).